We begin with the raw amino-acid sequence, 183 residues long: NAD(P)H-quinone oxidoreductase subunit I, chloroplastic (183 aa).

2 consecutive 4Fe-4S ferredoxin-type domains span residues 55–84 (GRIH…VDWK) and 95–124 (KSYS…MTEE). [4Fe-4S] cluster-binding residues include C64, C67, C70, C74, C104, C107, C110, and C114.

Belongs to the complex I 23 kDa subunit family. NDH is composed of at least 16 different subunits, 5 of which are encoded in the nucleus. [4Fe-4S] cluster serves as cofactor.

It is found in the plastid. The protein resides in the chloroplast thylakoid membrane. The enzyme catalyses a plastoquinone + NADH + (n+1) H(+)(in) = a plastoquinol + NAD(+) + n H(+)(out). The catalysed reaction is a plastoquinone + NADPH + (n+1) H(+)(in) = a plastoquinol + NADP(+) + n H(+)(out). In terms of biological role, NDH shuttles electrons from NAD(P)H:plastoquinone, via FMN and iron-sulfur (Fe-S) centers, to quinones in the photosynthetic chain and possibly in a chloroplast respiratory chain. The immediate electron acceptor for the enzyme in this species is believed to be plastoquinone. Couples the redox reaction to proton translocation, and thus conserves the redox energy in a proton gradient. This chain is NAD(P)H-quinone oxidoreductase subunit I, chloroplastic, found in Anthoceros angustus (Hornwort).